We begin with the raw amino-acid sequence, 346 residues long: Biotin synthase (346 aa).

Residues 38-256 (QQVQVSTLLS…IAVARIMMPT (219 aa)) enclose the Radical SAM core domain. [4Fe-4S] cluster contacts are provided by C53, C57, and C60. The [2Fe-2S] cluster site is built by C97, C128, C188, and R260.

The protein belongs to the radical SAM superfamily. Biotin synthase family. As to quaternary structure, homodimer. The cofactor is [4Fe-4S] cluster. [2Fe-2S] cluster is required as a cofactor.

The catalysed reaction is (4R,5S)-dethiobiotin + (sulfur carrier)-SH + 2 reduced [2Fe-2S]-[ferredoxin] + 2 S-adenosyl-L-methionine = (sulfur carrier)-H + biotin + 2 5'-deoxyadenosine + 2 L-methionine + 2 oxidized [2Fe-2S]-[ferredoxin]. Its pathway is cofactor biosynthesis; biotin biosynthesis; biotin from 7,8-diaminononanoate: step 2/2. Functionally, catalyzes the conversion of dethiobiotin (DTB) to biotin by the insertion of a sulfur atom into dethiobiotin via a radical-based mechanism. This is Biotin synthase from Salmonella gallinarum (strain 287/91 / NCTC 13346).